The sequence spans 383 residues: Chitinase-3-like protein 1 (383 aa).

Positions Met-1–Ala-21 are cleaved as a signal peptide. In terms of domain architecture, GH18 spans Tyr-22–Thr-383. A disulfide bond links Cys-26 and Cys-51. Residue Asn-60 is glycosylated (N-linked (GlcNAc...) asparagine). Residues Glu-70–Trp-71, Gly-97–Asn-100, Tyr-141, Met-204–Asp-207, and Arg-263 each bind chitin. A disulfide bond links Cys-300 and Cys-364. Residues Gln-324–Val-338 form an important for AKT1 activation and IL8 production region. Residue Trp-352 participates in chitin binding.

The protein belongs to the glycosyl hydrolase 18 family. As to quaternary structure, monomer. In terms of processing, glycosylated. Present in activated macrophages, articular chondrocytes, synovial cells as well as in liver. Very low or undetectable expression in non-inflammatory colon. Undetectable in muscle tissues, lung, pancreas, mononuclear cells, or fibroblasts.

The protein resides in the secreted. It localises to the extracellular space. The protein localises to the cytoplasm. Its subcellular location is the perinuclear region. It is found in the endoplasmic reticulum. Its function is as follows. Carbohydrate-binding lectin with a preference for chitin. Has no chitinase activity. May play a role in tissue remodeling and in the capacity of cells to respond to and cope with changes in their environment. Plays a role in T-helper cell type 2 (Th2) inflammatory response and IL-13-induced inflammation, regulating allergen sensitization, inflammatory cell apoptosis, dendritic cell accumulation and M2 macrophage differentiation. Facilitates invasion of pathogenic enteric bacteria into colonic mucosa and lymphoid organs. Mediates activation of AKT1 signaling pathway and subsequent IL8 production in colonic epithelial cells. Regulates antibacterial responses in lung by contributing to macrophage bacterial killing, controlling bacterial dissemination and augmenting host tolerance. Also regulates hyperoxia-induced injury, inflammation and epithelial apoptosis in lung. The sequence is that of Chitinase-3-like protein 1 (CHI3L1) from Homo sapiens (Human).